Consider the following 245-residue polypeptide: MSITHLLIDIEGTTCPVSFVSEVLFPYAKQSLSSYLNDHQEDLDLKNILQEAEREWDGDPSPDSIKLRQATRNQNLNFIDSIKVYFEYLINVDRKSTALKDLQGKIWDNGYRKGEITSHLFNETTECLKRWHRRQLSLSVYSSGSIQAQKLLYRHTNDGDLEHLFDHWFDTHTGNKKECASYRKIATKISTNPSEILFISDNGEECDAAGASGMETLFSLRDGNPDQSPRSHRVIKTLNDVDEYL.

This sequence belongs to the HAD-like hydrolase superfamily. MasA/MtnC family. In terms of assembly, monomer. Mg(2+) is required as a cofactor.

It catalyses the reaction 5-methylsulfanyl-2,3-dioxopentyl phosphate + H2O = 1,2-dihydroxy-5-(methylsulfanyl)pent-1-en-3-one + phosphate. It functions in the pathway amino-acid biosynthesis; L-methionine biosynthesis via salvage pathway; L-methionine from S-methyl-5-thio-alpha-D-ribose 1-phosphate: step 3/6. The protein operates within amino-acid biosynthesis; L-methionine biosynthesis via salvage pathway; L-methionine from S-methyl-5-thio-alpha-D-ribose 1-phosphate: step 4/6. Functionally, bifunctional enzyme that catalyzes the enolization of 2,3-diketo-5-methylthiopentyl-1-phosphate (DK-MTP-1-P) into the intermediate 2-hydroxy-3-keto-5-methylthiopentenyl-1-phosphate (HK-MTPenyl-1-P), which is then dephosphorylated to form the acireductone 1,2-dihydroxy-3-keto-5-methylthiopentene (DHK-MTPene). The chain is Enolase-phosphatase E1 from Parasynechococcus marenigrum (strain WH8102).